The chain runs to 218 residues: Ribose-5-phosphate isomerase A (218 aa).

Substrate-binding positions include 28 to 31, 81 to 84, and 94 to 97; these read TGST, DGAD, and KGGG. The active-site Proton acceptor is the E103. K121 serves as a coordination point for substrate.

This sequence belongs to the ribose 5-phosphate isomerase family. In terms of assembly, homodimer.

The enzyme catalyses aldehydo-D-ribose 5-phosphate = D-ribulose 5-phosphate. The protein operates within carbohydrate degradation; pentose phosphate pathway; D-ribose 5-phosphate from D-ribulose 5-phosphate (non-oxidative stage): step 1/1. In terms of biological role, catalyzes the reversible conversion of ribose-5-phosphate to ribulose 5-phosphate. This Shewanella sediminis (strain HAW-EB3) protein is Ribose-5-phosphate isomerase A.